Consider the following 895-residue polypeptide: Protein translocase subunit SecA (895 aa).

ATP-binding positions include Q87, G105–T109, and D512. The segment covering T833–T852 has biased composition (basic and acidic residues). The segment at T833–Y895 is disordered. 4 residues coordinate Zn(2+): C877, C879, C888, and H889. Over residues K883–Y895 the composition is skewed to basic residues.

It belongs to the SecA family. Monomer and homodimer. Part of the essential Sec protein translocation apparatus which comprises SecA, SecYEG and auxiliary proteins SecDF-YajC and YidC. The cofactor is Zn(2+).

It localises to the cell inner membrane. It is found in the cytoplasm. The enzyme catalyses ATP + H2O + cellular proteinSide 1 = ADP + phosphate + cellular proteinSide 2.. Its function is as follows. Part of the Sec protein translocase complex. Interacts with the SecYEG preprotein conducting channel. Has a central role in coupling the hydrolysis of ATP to the transfer of proteins into and across the cell membrane, serving both as a receptor for the preprotein-SecB complex and as an ATP-driven molecular motor driving the stepwise translocation of polypeptide chains across the membrane. In Pasteurella multocida (strain Pm70), this protein is Protein translocase subunit SecA.